Consider the following 259-residue polypeptide: Ubiquitin-conjugating enzyme E2 J2 (259 aa).

Topologically, residues 1–226 (MSSNSVKRAP…AGLQQANRHH (226 aa)) are cytoplasmic. The UBC core domain maps to 12-162 (TATQRLKQDY…DKVFCELFPE (151 aa)). Cys-94 serves as the catalytic Glycyl thioester intermediate. The interval 174 to 200 (QDELSSRPQALPLPDVVPDGETHHGQH) is disordered. The chain crosses the membrane as a helical; Anchor for type IV membrane protein span at residues 227 to 247 (GLLGGALANLFVIVGFAAFAY). Residues 248 to 259 (TVKYVLRSIAQE) are Lumenal-facing.

This sequence belongs to the ubiquitin-conjugating enzyme family.

It localises to the endoplasmic reticulum membrane. The enzyme catalyses S-ubiquitinyl-[E1 ubiquitin-activating enzyme]-L-cysteine + [E2 ubiquitin-conjugating enzyme]-L-cysteine = [E1 ubiquitin-activating enzyme]-L-cysteine + S-ubiquitinyl-[E2 ubiquitin-conjugating enzyme]-L-cysteine.. The protein operates within protein modification; protein ubiquitination. In terms of biological role, catalyzes the covalent attachment of ubiquitin to other proteins. Seems to function in the selective degradation of misfolded membrane proteins from the endoplasmic reticulum (ERAD). In cooperation with the GATOR2 complex, catalyzes 'Lys-6'-linked ubiquitination of NPRL2. The protein is Ubiquitin-conjugating enzyme E2 J2 (UBE2J2) of Bos taurus (Bovine).